We begin with the raw amino-acid sequence, 728 residues long: 1,4-alpha-glucan branching enzyme GlgB (728 aa).

Aspartate 405 serves as the catalytic Nucleophile. Catalysis depends on glutamate 458, which acts as the Proton donor.

This sequence belongs to the glycosyl hydrolase 13 family. GlgB subfamily. Monomer.

It carries out the reaction Transfers a segment of a (1-&gt;4)-alpha-D-glucan chain to a primary hydroxy group in a similar glucan chain.. It participates in glycan biosynthesis; glycogen biosynthesis. Its function is as follows. Catalyzes the formation of the alpha-1,6-glucosidic linkages in glycogen by scission of a 1,4-alpha-linked oligosaccharide from growing alpha-1,4-glucan chains and the subsequent attachment of the oligosaccharide to the alpha-1,6 position. The polypeptide is 1,4-alpha-glucan branching enzyme GlgB (Salmonella arizonae (strain ATCC BAA-731 / CDC346-86 / RSK2980)).